A 138-amino-acid chain; its full sequence is Small ribosomal subunit protein uS11c (138 aa).

Residues 1-22 (MTKPIPRIGSRRSGRIGSRKAG) form a disordered region. Residues 9 to 22 (GSRRSGRIGSRKAG) show a composition bias toward basic residues.

This sequence belongs to the universal ribosomal protein uS11 family. In terms of assembly, part of the 30S ribosomal subunit.

Its subcellular location is the plastid. The protein resides in the chloroplast. The sequence is that of Small ribosomal subunit protein uS11c from Piper cenocladum (Ant piper).